The following is a 552-amino-acid chain: MASQTQLRLIIYEFTRKIQTRLNTQKLHSFVTKSKLARDPYFATQLARFYALNDDLISARKLFDVFPERSVFLWNSIIRAYAKAHQFTTVLSLFSQILRSDTRPDNFTYACLARGFSESFDTKGLRCIHGIAIVSGLGFDQICGSAIVKAYSKAGLIVEASKLFCSIPDPDLALWNVMILGYGCCGFWDKGINLFNLMQHRGHQPNCYTMVALTSGLIDPSLLLVAWSVHAFCLKINLDSHSYVGCALVNMYSRCMCIASACSVFNSISEPDLVACSSLITGYSRCGNHKEALHLFAELRMSGKKPDCVLVAIVLGSCAELSDSVSGKEVHSYVIRLGLELDIKVCSALIDMYSKCGLLKCAMSLFAGIPEKNIVSFNSLILGLGLHGFASTAFEKFTEILEMGLIPDEITFSALLCTCCHSGLLNKGQEIFERMKSEFGIEPQTEHYVYMVKLMGMAGKLEEAFEFVMSLQKPIDSGILGALLSCCEVHENTHLAEVVAENIHKNGEERRSVYKVMLSNVYARYGRWDEVERLRDGISESYGGKLPGISWF.

13 PPR repeats span residues 39–69 (DPYF…FPER), 70–104 (SVFL…DTRP), 105–139 (DNFT…GLGF), 140–170 (DQIC…IPDP), 171–205 (DLAL…GHQP), 206–240 (NCYT…NLDS), 241–271 (HSYV…ISEP), 272–306 (DLVA…GKKP), 307–341 (DCVL…GLEL), 342–372 (DIKV…IPEK), 373–407 (NIVS…GLIP), 408–438 (DEIT…MKSE), and 444–474 (QTEH…LQKP). Residues 479 to 552 (ILGALLSCCE…GGKLPGISWF (74 aa)) are type E motif; degenerate.

This sequence belongs to the PPR family. PCMP-E subfamily.

This chain is Putative pentatricopeptide repeat-containing protein At1g64310 (PCMP-E65), found in Arabidopsis thaliana (Mouse-ear cress).